The following is a 477-amino-acid chain: Glycogen synthase (477 aa).

Position 16 (K16) interacts with ADP-alpha-D-glucose.

This sequence belongs to the glycosyltransferase 1 family. Bacterial/plant glycogen synthase subfamily.

The catalysed reaction is [(1-&gt;4)-alpha-D-glucosyl](n) + ADP-alpha-D-glucose = [(1-&gt;4)-alpha-D-glucosyl](n+1) + ADP + H(+). Its pathway is glycan biosynthesis; glycogen biosynthesis. In terms of biological role, synthesizes alpha-1,4-glucan chains using ADP-glucose. This Oceanobacillus iheyensis (strain DSM 14371 / CIP 107618 / JCM 11309 / KCTC 3954 / HTE831) protein is Glycogen synthase.